Consider the following 60-residue polypeptide: Small integral membrane protein 3 (60 aa).

A helical transmembrane segment spans residues 20–40; it reads IWVIVLIILATIVIMTSLLLC.

The protein resides in the membrane. This Homo sapiens (Human) protein is Small integral membrane protein 3 (SMIM3).